A 677-amino-acid polypeptide reads, in one-letter code: Threonine--tRNA ligase (677 aa).

The TGS domain occupies 1–59 (MAQATISITVNGEAKEVEATTTGVELFAEDKNIIAVKINGENRDLYTPLNDGDTVDPIA). Residues 255-561 (DHRKLGAEMD…LLEHYAGAFP (307 aa)) are catalytic. Zn(2+) contacts are provided by Cys360, His411, and His538.

Belongs to the class-II aminoacyl-tRNA synthetase family. In terms of assembly, homodimer. Zn(2+) serves as cofactor.

It is found in the cytoplasm. The catalysed reaction is tRNA(Thr) + L-threonine + ATP = L-threonyl-tRNA(Thr) + AMP + diphosphate + H(+). Functionally, catalyzes the attachment of threonine to tRNA(Thr) in a two-step reaction: L-threonine is first activated by ATP to form Thr-AMP and then transferred to the acceptor end of tRNA(Thr). Also edits incorrectly charged L-seryl-tRNA(Thr). The protein is Threonine--tRNA ligase of Bifidobacterium longum (strain DJO10A).